A 607-amino-acid chain; its full sequence is Condensin-2 complex subunit H2 (607 aa).

The residue at position 19 (Thr-19) is a Phosphothreonine. Phosphoserine is present on residues Ser-95, Ser-231, Ser-235, and Ser-252. Disordered stretches follow at residues 211 to 312 and 325 to 347; these read YPMS…WQSL and KGKP…KRKG. Over residues 254–263 the composition is skewed to acidic residues; the sequence is GEEDAEDGAE. Ser-494 is subject to Phosphoserine.

The protein belongs to the CND2 H2 (condensin-2 subunit 2) family. In terms of assembly, component of the condensin-2 complex, which contains the SMC2 and SMC4 heterodimer, and three non SMC subunits, NCAPG2, NCAPH2 and NCAPD3 that probably regulate the complex.

The protein localises to the nucleus. Functionally, regulatory subunit of the condensin-2 complex, a complex that seems to provide chromosomes with an additional level of organization and rigidity and in establishing mitotic chromosome architecture. May promote the resolution of double-strand DNA catenanes (intertwines) between sister chromatids. Condensin-mediated compaction likely increases tension in catenated sister chromatids, providing directionality for type II topoisomerase-mediated strand exchanges toward chromatid decatenation. Required for decatenation of chromatin bridges at anaphase. Early in neurogenesis, may play an essential role to ensure accurate mitotic chromosome condensation in neuron stem cells, ultimately affecting neuron pool and cortex size. Seems to have lineage-specific role in T-cell development. The protein is Condensin-2 complex subunit H2 of Mus musculus (Mouse).